The chain runs to 196 residues: Molybdenum cofactor guanylyltransferase (196 aa).

GTP-binding positions include 10–12 (LAG), K23, N51, D69, and D99. D99 lines the Mg(2+) pocket.

The protein belongs to the MobA family. As to quaternary structure, monomer. Requires Mg(2+) as cofactor.

The protein resides in the cytoplasm. It catalyses the reaction Mo-molybdopterin + GTP + H(+) = Mo-molybdopterin guanine dinucleotide + diphosphate. Its function is as follows. Transfers a GMP moiety from GTP to Mo-molybdopterin (Mo-MPT) cofactor (Moco or molybdenum cofactor) to form Mo-molybdopterin guanine dinucleotide (Mo-MGD) cofactor. This chain is Molybdenum cofactor guanylyltransferase, found in Shewanella frigidimarina (strain NCIMB 400).